A 1000-amino-acid polypeptide reads, in one-letter code: Bifunctional glutamine synthetase adenylyltransferase/adenylyl-removing enzyme (1000 aa).

Residues 1–481 (MTAPGRRSST…LHEKLFYRPL (481 aa)) form an adenylyl removase region. The tract at residues 487 to 1000 (QLAPGEARLS…AVVDEQFYGA (514 aa)) is adenylyl transferase.

The protein belongs to the GlnE family. Mg(2+) is required as a cofactor.

The enzyme catalyses [glutamine synthetase]-O(4)-(5'-adenylyl)-L-tyrosine + phosphate = [glutamine synthetase]-L-tyrosine + ADP. It carries out the reaction [glutamine synthetase]-L-tyrosine + ATP = [glutamine synthetase]-O(4)-(5'-adenylyl)-L-tyrosine + diphosphate. Involved in the regulation of glutamine synthetase GlnA, a key enzyme in the process to assimilate ammonia. When cellular nitrogen levels are high, the C-terminal adenylyl transferase (AT) inactivates GlnA by covalent transfer of an adenylyl group from ATP to specific tyrosine residue of GlnA, thus reducing its activity. Conversely, when nitrogen levels are low, the N-terminal adenylyl removase (AR) activates GlnA by removing the adenylyl group by phosphorolysis, increasing its activity. The regulatory region of GlnE binds the signal transduction protein PII (GlnB) which indicates the nitrogen status of the cell. The protein is Bifunctional glutamine synthetase adenylyltransferase/adenylyl-removing enzyme of Streptomyces avermitilis (strain ATCC 31267 / DSM 46492 / JCM 5070 / NBRC 14893 / NCIMB 12804 / NRRL 8165 / MA-4680).